A 419-amino-acid chain; its full sequence is Protein transport protein sec9 (419 aa).

A compositionally biased stretch (basic residues) spans 1-11; the sequence is MKKLFKKKKGV. Disordered regions lie at residues 1–60, 116–143, and 156–186; these read MKKL…TYGS, ARKD…PSQD, and ARIQ…EGYR. Residues 21-32 show a composition bias toward polar residues; the sequence is ESNSNTATNAPS. Residues 36–60 are compositionally biased toward low complexity; it reads GGTTANSYSSNSYNDNNNSNSTYGS. S141 carries the phosphoserine modification. 2 t-SNARE coiled-coil homology domains span residues 203 to 265 and 356 to 418; these read QFVK…AREL and DAME…LRHI.

This sequence belongs to the SNAP-25 family.

In terms of biological role, has a role in cell separation, a final step of cytokinesis and in the assembly of the forespore membrane. May have a role in the transport of secretory proteins to these growing sites. This Schizosaccharomyces pombe (strain 972 / ATCC 24843) (Fission yeast) protein is Protein transport protein sec9 (sec9).